The chain runs to 416 residues: Zinc finger protein 92 homolog (416 aa).

In terms of domain architecture, KRAB spans 14–85 (VSFEDVSVYF…DIPRTWATAG (72 aa)). The segment at 86–125 (LHIGDRTQSKTSTSTQKHSGRQLPGADPQGGKEGQAARSS) is disordered. C2H2-type zinc fingers lie at residues 152-174 (YLCQ…RIIH), 180-202 (YACP…QRIH), 208-230 (YACP…QVIH), 236-258 (FACG…ARVH), 264-286 (YACP…QRTH), 292-314 (YACG…QRSH), 320-342 (FACR…RRVH), and 348-370 (YECS…QAVH). A disordered region spans residues 368–416 (AVHGARRPAKAETARRLAGPGSTGPGSAVAATSPPRPSTAARPSRPSRR). Low complexity predominate over residues 394–416 (SAVAATSPPRPSTAARPSRPSRR).

This sequence belongs to the krueppel C2H2-type zinc-finger protein family.

The protein localises to the nucleus. Functionally, KRAB domain-containing zinc-finger protein that represses B1/Alu SINE transposable elements and modulates the transcription of nearby genes in a tissue-specific manner. It regulates glucose homeostasis and lipid metabolism by modulating the expression of the endocrine cell-defining transcription factor, MAFB, in pancreatic islets and, the fat metabolism regulator, ACACB, in adipose tissue and muscle. The protein is Zinc finger protein 92 homolog (ZFP92) of Homo sapiens (Human).